The chain runs to 261 residues: uncharacterized protein (261 aa).

Residues 16-147 (KQTSLVLQNL…QTNVNVLRSQ (132 aa)) adopt a coiled-coil conformation.

Its subcellular location is the cytoplasm. This is an uncharacterized protein from Schizosaccharomyces pombe (strain 972 / ATCC 24843) (Fission yeast).